Reading from the N-terminus, the 245-residue chain is AP-1-like transcription factor YAP7 (245 aa).

The disordered stretch occupies residues 1-144; that stretch reads MRQRRSVVAV…NRDAQRAYRE (144 aa). Polar residues predominate over residues 74 to 94; it reads SANNDGSSKIKKVQTSNQKDQ. 2 stretches are compositionally biased toward basic and acidic residues: residues 95 to 114 and 135 to 144; these read MTTK…KSDD and NRDAQRAYRE. The region spanning 125 to 188 is the bZIP domain; that stretch reads VDSVEKRRRQ…SDTKENLQKS (64 aa). Positions 130-149 are basic motif; the sequence is KRRRQNRDAQRAYRERRTTR. Residues 153-181 are leucine-zipper; that stretch reads LEEKVEMLHNLVDDWQRKYKLLESEFSDT.

It belongs to the bZIP family. YAP subfamily. As to quaternary structure, homodimer.

The protein resides in the nucleus. Probable transcription activator linked to cell cycle that induces transcription activation of genes in the environmental stress response and metabolism control pathways, like the closely related YAP5. The sequence is that of AP-1-like transcription factor YAP7 (YAP7) from Saccharomyces cerevisiae (strain ATCC 204508 / S288c) (Baker's yeast).